The primary structure comprises 1113 residues: Cytospin-A (1113 aa).

Residues 1 to 160 (MKKSVRPAAS…KSKSDGQISD (160 aa)) are disordered. Positions 59–103 (ASCNAVSKSKRTTSVGTTASTLDSKPKTASGTTSKRLASSLSKET) are enriched in polar residues. A compositionally biased stretch (basic and acidic residues) spans 145 to 154 (SEGRMSKSKS). Positions 220 to 259 (AADVESTLILLQEQNQAIREELNLLKSENRMLKDRLNALG) form a coiled coil. Residues 284–374 (AGSGQSDGGG…RRGSSGNASE (91 aa)) form a disordered region. A compositionally biased stretch (low complexity) spans 338–358 (SSDDALDAPSGASSSSESECA). 2 coiled-coil regions span residues 379–433 (CLTE…MDSL) and 473–791 (MELE…RGRV). Disordered stretches follow at residues 766–785 (QEKNEKLSKELEEVKSRKQD), 832–902 (FDSA…PTYP), 914–957 (GSAA…DGAS), and 972–997 (ALASSSPTASVTPTTRSRLREERKDP). The span at 834 to 845 (SASQGPPSSGAS) shows a compositional bias: low complexity. Pro residues predominate over residues 856-867 (PRTPLSPSPMKT). The span at 925–940 (QRVSNMDSTKAISVSR) shows a compositional bias: polar residues. Positions 941 to 951 (RSSEEMKRDMA) are enriched in basic and acidic residues. Low complexity predominate over residues 972–981 (ALASSSPTAS). One can recognise a Calponin-homology (CH) domain in the interval 1007 to 1112 (GSKRNALLKW…YVTAIYKYFE (106 aa)).

The protein belongs to the cytospin-A family. May interact with both microtubules and actin cytoskeleton.

The protein resides in the cytoplasm. The protein localises to the cytoskeleton. Its subcellular location is the spindle. It localises to the cell junction. It is found in the gap junction. In terms of biological role, involved in cytokinesis and spindle organization. May play a role in actin cytoskeleton organization and microtubule stabilization and hence required for proper cell adhesion and migration. The chain is Cytospin-A (specc1l) from Tetraodon nigroviridis (Spotted green pufferfish).